Here is a 281-residue protein sequence, read N- to C-terminus: MIENRPWLTIFSHTMLILGIAVILFPLYVAFVAATLDKQAVYAAPMTLIPGTHLLENIHNIWVNGVGTNSAPFWRMLLNSFVMAFSITLGKITVSMLSAFAIVWFRFPLRNLFFWMIFITLMLPVEVRIFPTVEVIANLKMLDSYAGLTLPLMASATATFLFRQFFMTLPDELVEAARIDGASPMRFFCDIVFPLSKTNLAALFVITFIYGWNQYLWPLLIITDVDLGTTVAGIKGMIATGEGTTEWNSVMAAMLLTLIPPVVIVLVMQRAFVRGLVDSEK.

The next 6 helical transmembrane spans lie at 16–36, 85–105, 113–133, 142–162, 202–222, and 247–267; these read LILG…AATL, FSIT…IVWF, FFWM…FPTV, LDSY…TFLF, ALFV…LLII, and WNSV…IVLV. An ABC transmembrane type-1 domain is found at 77–268; the sequence is LLNSFVMAFS…IPPVVIVLVM (192 aa).

Belongs to the binding-protein-dependent transport system permease family. UgpAE subfamily. In terms of assembly, the complex is composed of two ATP-binding proteins (UgpC), two transmembrane proteins (UgpA and UgpE) and a solute-binding protein (UgpB).

The protein resides in the cell inner membrane. Its function is as follows. Part of the ABC transporter complex UgpBAEC involved in sn-glycerol-3-phosphate (G3P) import. Probably responsible for the translocation of the substrate across the membrane. In Escherichia coli O157:H7, this protein is sn-glycerol-3-phosphate transport system permease protein UgpE (ugpE).